A 198-amino-acid polypeptide reads, in one-letter code: Nucleoid occlusion factor SlmA (198 aa).

The region spanning 10–70 (NRREEILQSL…SLIEFIEDSL (61 aa)) is the HTH tetR-type domain. The H-T-H motif DNA-binding region spans 33–52 (TTAKLAASVGVSEAALYRHF). Residues 117–144 (EQDRLQGRINQLFERIEAQLRQVLREKR) adopt a coiled-coil conformation.

It belongs to the nucleoid occlusion factor SlmA family. In terms of assembly, homodimer. Interacts with FtsZ.

It localises to the cytoplasm. The protein localises to the nucleoid. Functionally, required for nucleoid occlusion (NO) phenomenon, which prevents Z-ring formation and cell division over the nucleoid. Acts as a DNA-associated cell division inhibitor that binds simultaneously chromosomal DNA and FtsZ, and disrupts the assembly of FtsZ polymers. SlmA-DNA-binding sequences (SBS) are dispersed on non-Ter regions of the chromosome, preventing FtsZ polymerization at these regions. The polypeptide is Nucleoid occlusion factor SlmA (Citrobacter koseri (strain ATCC BAA-895 / CDC 4225-83 / SGSC4696)).